Here is a 66-residue protein sequence, read N- to C-terminus: Beta-toxin ChFII.9 (66 aa).

Residues 1–66 form the LCN-type CS-alpha/beta domain; that stretch reads KEGYIVDYHT…VWPLPNKRCK (66 aa). 4 disulfide bridges follow: C12–C65, C16–C41, C25–C46, and C29–C48. Lysine amide is present on K66.

Expressed by the venom gland.

The protein resides in the secreted. Functionally, beta toxins bind voltage independently at site-4 of sodium channels (Nav) and shift the activation voltage toward more negative potentials, thereby affecting sodium channel activation CC and promoting spontaneous and repetitive firing. This chain is Beta-toxin ChFII.9, found in Centruroides hirsutipalpus (Scorpion).